A 184-amino-acid chain; its full sequence is Probable RNA 2'-phosphotransferase (184 aa).

This sequence belongs to the KptA/TPT1 family.

Removes the 2'-phosphate from RNA via an intermediate in which the phosphate is ADP-ribosylated by NAD followed by a presumed transesterification to release the RNA and generate ADP-ribose 1''-2''-cyclic phosphate (APPR&gt;P). May function as an ADP-ribosylase. This chain is Probable RNA 2'-phosphotransferase, found in Rhizobium leguminosarum bv. trifolii (strain WSM2304).